The following is a 160-amino-acid chain: Glucan endo-1,3-beta-glucosidase, acidic isoform PR-O (160 aa).

Residue glutamate 81 is the Nucleophile of the active site.

This sequence belongs to the glycosyl hydrolase 17 family. In terms of processing, the N-terminus is blocked.

The protein localises to the secreted. It localises to the extracellular space. It carries out the reaction Hydrolysis of (1-&gt;3)-beta-D-glucosidic linkages in (1-&gt;3)-beta-D-glucans.. Its function is as follows. Implicated in the defense of plants against pathogens. In Nicotiana tabacum (Common tobacco), this protein is Glucan endo-1,3-beta-glucosidase, acidic isoform PR-O (PR0).